Here is a 281-residue protein sequence, read N- to C-terminus: Para-Rep C9 (281 aa).

One can recognise a CRESS-DNA virus Rep endonuclease domain in the interval 1–95 (MSAVNWVFTL…VAGPWSYGEL (95 aa)). The RCR-1 motif lies at 7 to 10 (VFTL). A divalent metal cation contacts are provided by E33 and H39. The short motif at 39–41 (HIQ) is the RCR-2 element. A Nuclear localization signal motif is present at residues 48–69 (KKAKMNTVKNIIGGNPHLEKMK). Catalysis depends on Y78, which acts as the For DNA cleavage activity. The RCR-3 signature appears at 78-81 (YAQK). Residue E83 coordinates a divalent metal cation. The Nuclear localization signal motif lies at 95–101 (LLKKGSH). 178–180 (GKS) is a binding site for ATP.

Belongs to the nanoviridea/circoviridae replication-associated protein family. Homooligomer (Potential). Rep binds to repeated DNA motifs (iterons). The cofactor is Mg(2+). It depends on Mn(2+) as a cofactor.

The protein resides in the host nucleus. It carries out the reaction ATP + H2O = ADP + phosphate + H(+). In terms of biological role, initiates and terminates the replication only of its own subviral DNA molecule. The closed circular ssDNA genome is first converted to a superhelical dsDNA. Rep binds a specific hairpin at the genome origin of replication. Introduces an endonucleolytic nick within the intergenic region of the genome, thereby initiating the rolling circle replication (RCR). Following cleavage, binds covalently to the 5'-phosphate of DNA as a tyrosyl ester. The cleavage gives rise to a free 3'-OH that serves as a primer for the cellular DNA polymerase. The polymerase synthesizes the (+) strand DNA by rolling circle mechanism. After one round of replication, a Rep-catalyzed nucleotidyl transfer reaction releases a circular single-stranded virus genome, thereby terminating the replication. Displays origin-specific DNA cleavage, nucleotidyl transferase, ATPase and helicase activities. This is Para-Rep C9 (C9) from Faba bean necrotic yellows C9 alphasatellite (FBNYC9A).